The primary structure comprises 141 residues: ATP synthase epsilon chain (141 aa).

This sequence belongs to the ATPase epsilon chain family. In terms of assembly, F-type ATPases have 2 components, CF(1) - the catalytic core - and CF(0) - the membrane proton channel. CF(1) has five subunits: alpha(3), beta(3), gamma(1), delta(1), epsilon(1). CF(0) has three main subunits: a, b and c.

The protein localises to the cell inner membrane. Its function is as follows. Produces ATP from ADP in the presence of a proton gradient across the membrane. The protein is ATP synthase epsilon chain (atpC) of Acidithiobacillus ferridurans.